Reading from the N-terminus, the 125-residue chain is Large ribosomal subunit protein bL12 (125 aa).

Belongs to the bacterial ribosomal protein bL12 family. In terms of assembly, homodimer. Part of the ribosomal stalk of the 50S ribosomal subunit. Forms a multimeric L10(L12)X complex, where L10 forms an elongated spine to which 2 to 4 L12 dimers bind in a sequential fashion. Binds GTP-bound translation factors.

In terms of biological role, forms part of the ribosomal stalk which helps the ribosome interact with GTP-bound translation factors. Is thus essential for accurate translation. The chain is Large ribosomal subunit protein bL12 from Liberibacter africanus (Citrus greening disease).